Reading from the N-terminus, the 309-residue chain is MIFKRFVNLLVFLFLLGAGLLTFFLILSGGRESGTLKNFYWLQADTNGFNSAPSTTRWYNYNWCGYEDGQLANCSSRAPAKPFSPRDNFGNSVNLPSSFRNNRDTYYYLSRVGWAMLLISLFFIVLALVPGFLATFLPFKAVPVLYCVLSWLAFFFIILAACLYTGCYVKARKTFRNSGRSARLGPKNFAFIWTSVFLMLVNAIWSTIFSATHKAHSTYSDHDMYAQYESPSVDTGAQMEKSTYNSGATDGAGPITAAPVVGQPQPTTTTTPAGNGKFFQKLKTRKQVPSAELEPAGDGGLAGPVTVRD.

Topologically, residues 1-5 (MIFKR) are cytoplasmic. A helical transmembrane segment spans residues 6–26 (FVNLLVFLFLLGAGLLTFFLI). Residues 27–116 (LSGGRESGTL…YYLSRVGWAM (90 aa)) lie on the Extracellular side of the membrane. The N-linked (GlcNAc...) asparagine glycan is linked to Asn-73. The chain crosses the membrane as a helical span at residues 117–137 (LLISLFFIVLALVPGFLATFL). At 138–140 (PFK) the chain is on the cytoplasmic side. The chain crosses the membrane as a helical span at residues 141-161 (AVPVLYCVLSWLAFFFIILAA). The Extracellular portion of the chain corresponds to 162–188 (CLYTGCYVKARKTFRNSGRSARLGPKN). Residues 189–209 (FAFIWTSVFLMLVNAIWSTIF) form a helical membrane-spanning segment. Over 210 to 309 (SATHKAHSTY…GLAGPVTVRD (100 aa)) the chain is Cytoplasmic. Residues Ser-230 and Ser-232 each carry the phosphoserine modification. Residue Thr-235 is modified to Phosphothreonine. The tract at residues 253–309 (GPITAAPVVGQPQPTTTTTPAGNGKFFQKLKTRKQVPSAELEPAGDGGLAGPVTVRD) is disordered. Residues 258–274 (APVVGQPQPTTTTTPAG) show a composition bias toward low complexity.

This sequence belongs to the SUR7 family.

The protein resides in the cell membrane. Functionally, involved in sporulation and affects the sphingolipid composition of the plasma membrane. This is SUR7 family protein FMP45 (FMP45) from Saccharomyces cerevisiae (strain ATCC 204508 / S288c) (Baker's yeast).